A 323-amino-acid polypeptide reads, in one-letter code: Mycothiol acetyltransferase (323 aa).

N-acetyltransferase domains lie at 5-145 (LTTD…LPLR) and 168-323 (VEIR…PEER). Glu36 serves as a coordination point for 1D-myo-inositol 2-(L-cysteinylamino)-2-deoxy-alpha-D-glucopyranoside. Residue 83-85 (VAV) coordinates acetyl-CoA. 3 residues coordinate 1D-myo-inositol 2-(L-cysteinylamino)-2-deoxy-alpha-D-glucopyranoside: Glu195, Lys236, and Glu252. Acetyl-CoA-binding positions include 256–258 (VGV) and 263–269 (QGSGLGR). Tyr290 contacts 1D-myo-inositol 2-(L-cysteinylamino)-2-deoxy-alpha-D-glucopyranoside. Residue 295-300 (NRPAVQ) coordinates acetyl-CoA.

It belongs to the acetyltransferase family. MshD subfamily. As to quaternary structure, monomer.

It catalyses the reaction 1D-myo-inositol 2-(L-cysteinylamino)-2-deoxy-alpha-D-glucopyranoside + acetyl-CoA = mycothiol + CoA + H(+). Its function is as follows. Catalyzes the transfer of acetyl from acetyl-CoA to desacetylmycothiol (Cys-GlcN-Ins) to form mycothiol. This is Mycothiol acetyltransferase from Thermobifida fusca (strain YX).